The sequence spans 255 residues: Testis-specific H1 histone (255 aa).

A disordered region spans residues 1-54; that stretch reads MEQALTGEAQSRWPRRGGSGAMAEAPGPSGESRGHSATQLPAEKTVGGPSRGCS. Serine 56 is modified (phosphoserine). A compositionally biased stretch (basic residues) spans 124–134; the sequence is KVPKPRRKPGR. The tract at residues 124–255 is disordered; it reads KVPKPRRKPG…PKKPAQRTIQ (132 aa). Residues 142–152 show a composition bias toward low complexity; the sequence is RAPWRTPAAPR. Composition is skewed to basic residues over residues 153 to 166 and 174 to 194; these read SSRRRRQPLRKAAR and RNARAKAKANARARRTRRARP. 2 stretches are compositionally biased toward basic and acidic residues: residues 195–230 and 238–248; these read RAKEPPCARAKEEAGATAADEGRGQAVKEDTTPRSG and KPREEKQEPKK.

Belongs to the histone H1/H5 family. Testis-specific.

The protein resides in the nucleus. The protein localises to the chromosome. In terms of biological role, essential for normal spermatogenesis and male fertility. Required for proper cell restructuring and DNA condensation during the elongation phase of spermiogenesis. Involved in the histone-protamine transition of sperm chromatin and the subsequent production of functional sperm. Binds both double-stranded and single-stranded DNA, ATP and protamine-1. This chain is Testis-specific H1 histone, found in Homo sapiens (Human).